We begin with the raw amino-acid sequence, 490 residues long: Subtilisin-like protease 8 (490 aa).

A signal peptide spans 1–26 (MKGLLSLSVLPVLAYASPMIVDSIHQ). Positions 27–134 (DAAPILSSTN…YIERDSEVRA (108 aa)) are excised as a propeptide. An Inhibitor I9 domain is found at 43–133 (SYIVVFKKGV…EYIERDSEVR (91 aa)). The Peptidase S8 domain maps to 144 to 450 (PWGLARISHR…GGSDNYKEIV (307 aa)). Catalysis depends on charge relay system residues aspartate 180 and histidine 212. Asparagine 282 carries N-linked (GlcNAc...) asparagine glycosylation. Serine 378 acts as the Charge relay system in catalysis. N-linked (GlcNAc...) asparagine glycosylation occurs at asparagine 455.

It belongs to the peptidase S8 family.

Its subcellular location is the secreted. In terms of biological role, secreted subtilisin-like serine protease with keratinolytic activity that contributes to pathogenicity. This is Subtilisin-like protease 8 (SUB8) from Arthroderma otae (strain ATCC MYA-4605 / CBS 113480) (Microsporum canis).